A 163-amino-acid chain; its full sequence is Intron-encoded endonuclease I-PpoI (163 aa).

Homodimer. The cofactor is Zn(2+).

Functionally, mediates the homing of a group I intron in the ribosomal DNA. Makes a four-base staggered cut in its ribosomal DNA target sequence. This is Intron-encoded endonuclease I-PpoI from Physarum polycephalum (Slime mold).